A 248-amino-acid polypeptide reads, in one-letter code: Tryptophan synthase alpha chain (248 aa).

Active-site proton acceptor residues include Glu-36 and Asp-47.

The protein belongs to the TrpA family. As to quaternary structure, tetramer of two alpha and two beta chains.

It catalyses the reaction (1S,2R)-1-C-(indol-3-yl)glycerol 3-phosphate + L-serine = D-glyceraldehyde 3-phosphate + L-tryptophan + H2O. It participates in amino-acid biosynthesis; L-tryptophan biosynthesis; L-tryptophan from chorismate: step 5/5. Functionally, the alpha subunit is responsible for the aldol cleavage of indoleglycerol phosphate to indole and glyceraldehyde 3-phosphate. The sequence is that of Tryptophan synthase alpha chain from Archaeoglobus fulgidus (strain ATCC 49558 / DSM 4304 / JCM 9628 / NBRC 100126 / VC-16).